The following is a 1067-amino-acid chain: Mediator of RNA polymerase II transcription subunit 5 (1067 aa).

This sequence belongs to the Mediator complex subunit 5 family. In terms of assembly, component of the Mediator complex.

Its subcellular location is the nucleus. Its function is as follows. Component of the Mediator complex, a coactivator involved in the regulated transcription of nearly all RNA polymerase II-dependent genes. Mediator functions as a bridge to convey information from gene-specific regulatory proteins to the basal RNA polymerase II transcription machinery. Mediator is recruited to promoters by direct interactions with regulatory proteins and serves as a scaffold for the assembly of a functional preinitiation complex with RNA polymerase II and the general transcription factors. This is Mediator of RNA polymerase II transcription subunit 5 (NUT1) from Kluyveromyces lactis (strain ATCC 8585 / CBS 2359 / DSM 70799 / NBRC 1267 / NRRL Y-1140 / WM37) (Yeast).